The sequence spans 451 residues: Tubulin gamma-2 chain (451 aa).

Ser-131 carries the phosphoserine; by BRSK1 modification. Residue 142–148 (AGGTGSG) coordinates GTP.

This sequence belongs to the tubulin family. In terms of assembly, component of the gamma-tubulin ring complex (gTuRC) consisting of TUBGCP2, TUBGCP3, TUBGCP4, TUBGCP5 and TUBGCP6 and gamma-tubulin TUBG1 or TUBG2. TUBGCP2, TUBGCP3, TUBGCP4, TUBGCP5 and TUBGCP6 assemble in a 5:5:2:1:1 stoichiometry; each is associated with a gamma-tubulin, thereby arranging 14 gamma-tubulins in a helical manner. Gamma-tubulin at the first position is blocked by TUBGCP3 at the last position, allowing 13 protafilaments to grow into a microtubule. Interacts with alpha-beta tubulin heterodimers; the interaction allows microtubules to nucleate from the gTuRC. Post-translationally, phosphorylation at Ser-131 by BRSK1 regulates centrosome duplication, possibly by mediating relocation of gamma-tubulin and its associated proteins from the cytoplasm to the centrosome.

It localises to the cytoplasm. The protein localises to the cytoskeleton. It is found in the microtubule organizing center. The protein resides in the centrosome. Tubulin is the major constituent of microtubules, protein filaments consisting of alpha- and beta-tubulin heterodimers. Gamma-tubulin is a key component of the gamma-tubulin ring complex (gTuRC) which mediates microtubule nucleation. The gTuRC regulates the minus-end nucleation of alpha-beta tubulin heterodimers that grow into microtubule protafilaments, a critical step in centrosome duplication and spindle formation. The chain is Tubulin gamma-2 chain (TUBG2) from Homo sapiens (Human).